The sequence spans 1049 residues: Probable disease resistance protein RF9 (1049 aa).

Residues 25–41 (QGVEDQVTELKRDLNLL) are a coiled coil. Positions 139–158 (GYKQPQGDKQREMRPRFSKD) are disordered. Basic and acidic residues predominate over residues 144–158 (QGDKQREMRPRFSKD). The region spanning 147 to 460 (KQREMRPRFS…AEGIFQPRHY (314 aa)) is the NB-ARC domain. ATP is bound at residue 190-197 (GMGGLGKT). LRR repeat units follow at residues 584 to 608 (LELLRVLDIHRAKLKGGKLASSIGQ), 609 to 634 (LIHLRYLNLKHAEVTHIPYSLGNLKL), 657 to 682 (MQQLRYLALPKDMGRKTKLELSNLVK), 683 to 707 (LETLKNFSTKNCSLEDLRGMVRLRT), 776 to 799 (PSHLTTLYLQHCRLEEDPMPILEK), 800 to 827 (LHQLKELELRRKSFSGKEMVCSSGGFPQ), 849 to 873 (MPVLHTLDIRDCRKLKQLPDEHLPS), 896 to 923 (LVHLKELQLLFRSFSGRIMVCAGSGFPQ), 945 to 968 (MPQLHTLEIRRCPKLKKLPNGFPQ), and 990 to 1015 (MPLLHTLRIWNCPKLKQLPDGLRFIY).

Belongs to the disease resistance NB-LRR family.

In terms of biological role, potential disease resistance protein. This chain is Probable disease resistance protein RF9 (RF9), found in Arabidopsis thaliana (Mouse-ear cress).